Here is a 462-residue protein sequence, read N- to C-terminus: Beta-glucosidase 1A (462 aa).

Substrate-binding residues include Gln-20, His-123, and Asn-169. Glu-170 functions as the Proton donor in the catalytic mechanism. Residue Tyr-301 participates in substrate binding. The active-site Nucleophile is Glu-365. Residues Trp-415 and 422-423 (EW) each bind substrate.

Belongs to the glycosyl hydrolase 1 family.

It catalyses the reaction Hydrolysis of terminal, non-reducing beta-D-glucosyl residues with release of beta-D-glucose.. Functionally, plays an important role in cellulose degradation. Shows hydrolytic activity against several glycosidic compounds. This chain is Beta-glucosidase 1A, found in Phanerodontia chrysosporium (White-rot fungus).